The sequence spans 508 residues: Glycerol kinase (508 aa).

Threonine 14 is an ADP binding site. Residues threonine 14, threonine 15, and serine 16 each contribute to the ATP site. Threonine 14 lines the sn-glycerol 3-phosphate pocket. Arginine 18 is a binding site for ADP. Sn-glycerol 3-phosphate contacts are provided by arginine 84, glutamate 85, tyrosine 136, and aspartate 245. Residues arginine 84, glutamate 85, tyrosine 136, aspartate 245, and glutamine 246 each contribute to the glycerol site. Positions 267 and 314 each coordinate ADP. Threonine 267, glycine 314, glutamine 318, and glycine 415 together coordinate ATP. Residues glycine 415 and asparagine 419 each coordinate ADP.

Belongs to the FGGY kinase family.

The enzyme catalyses glycerol + ATP = sn-glycerol 3-phosphate + ADP + H(+). It functions in the pathway polyol metabolism; glycerol degradation via glycerol kinase pathway; sn-glycerol 3-phosphate from glycerol: step 1/1. Its activity is regulated as follows. Inhibited by fructose 1,6-bisphosphate (FBP). Key enzyme in the regulation of glycerol uptake and metabolism. Catalyzes the phosphorylation of glycerol to yield sn-glycerol 3-phosphate. This chain is Glycerol kinase, found in Bordetella parapertussis (strain 12822 / ATCC BAA-587 / NCTC 13253).